The following is a 197-amino-acid chain: Molybdenum cofactor guanylyltransferase (197 aa).

Residues 10-12 (LAG), K23, D69, and D99 contribute to the GTP site. Residue D99 participates in Mg(2+) binding.

It belongs to the MobA family. Monomer. The cofactor is Mg(2+).

It is found in the cytoplasm. The catalysed reaction is Mo-molybdopterin + GTP + H(+) = Mo-molybdopterin guanine dinucleotide + diphosphate. Its function is as follows. Transfers a GMP moiety from GTP to Mo-molybdopterin (Mo-MPT) cofactor (Moco or molybdenum cofactor) to form Mo-molybdopterin guanine dinucleotide (Mo-MGD) cofactor. The sequence is that of Molybdenum cofactor guanylyltransferase from Serratia proteamaculans (strain 568).